Consider the following 518-residue polypeptide: Chromosomal replication initiator protein DnaA (518 aa).

The domain I, interacts with DnaA modulators stretch occupies residues 1–72; the sequence is MNEFWQHCSA…DLARDFWHSP (72 aa). The domain II stretch occupies residues 72–181; that stretch reads PVDVQFVLDP…GESDSTYERS (110 aa). A disordered region spans residues 155–178; sequence AAARRTWRPGAAAQAAGGESDSTY. The domain III, AAA+ region stretch occupies residues 182-398; the sequence is KLNPVLTFDN…GALRKILAYS (217 aa). 4 residues coordinate ATP: Gly-226, Gly-228, Lys-229, and Thr-230. Residues 399-518 are domain IV, binds dsDNA; the sequence is KFHGREITIE…LHVLEQTLKG (120 aa).

This sequence belongs to the DnaA family. As to quaternary structure, oligomerizes as a right-handed, spiral filament on DNA at oriC.

The protein localises to the cytoplasm. Plays an essential role in the initiation and regulation of chromosomal replication. ATP-DnaA binds to the origin of replication (oriC) to initiate formation of the DNA replication initiation complex once per cell cycle. Binds the DnaA box (a 9 base pair repeat at the origin) and separates the double-stranded (ds)DNA. Forms a right-handed helical filament on oriC DNA; dsDNA binds to the exterior of the filament while single-stranded (ss)DNA is stabiized in the filament's interior. The ATP-DnaA-oriC complex binds and stabilizes one strand of the AT-rich DNA unwinding element (DUE), permitting loading of DNA polymerase. After initiation quickly degrades to an ADP-DnaA complex that is not apt for DNA replication. Binds acidic phospholipids. The sequence is that of Chromosomal replication initiator protein DnaA from Paraburkholderia phymatum (strain DSM 17167 / CIP 108236 / LMG 21445 / STM815) (Burkholderia phymatum).